We begin with the raw amino-acid sequence, 706 residues long: Lethal(3)malignant brain tumor-like protein 2 (706 aa).

Residues 1–85 (MEKPRGVEET…GTPRSLDGSG (85 aa)) are disordered. Residue S13 is modified to Phosphoserine. Acidic residues predominate over residues 15–26 (PMEEEEEDDDLE). The span at 39–50 (SSAGSESSSYLE) shows a compositional bias: low complexity. Basic and acidic residues predominate over residues 54-63 (EAEHEDREAG). Position 68 is a phosphoserine (S68). A Phosphothreonine modification is found at T77. Residues 82 to 117 (DGSGSEPAVCEMCGIVGTREAFFSKTKRFCSVSCSR) form an FCS-type zinc finger. Positions 91, 94, 111, and 115 each coordinate Zn(2+). 4 MBT repeats span residues 180 to 284 (FDWG…LVPP), 292 to 392 (TDWK…IKLS), 398 to 501 (MAHH…LTPP), and 509 to 605 (FSWE…LQPP). S339 is modified (phosphoserine). A Glycyl lysine isopeptide (Lys-Gly) (interchain with G-Cter in SUMO2) cross-link involves residue K406. The segment at 606–669 (VATEPTTPLK…KAPSEPAPDE (64 aa)) is disordered. Residues 620–635 (TKKKKKQFGKKRKRIP) show a composition bias toward basic residues. Residues K648, K660, and K676 each participate in a glycyl lysine isopeptide (Lys-Gly) (interchain with G-Cter in SUMO2) cross-link. The segment at 685–706 (ADKALSPELPVPVENIKQETDD) is disordered. At S690 the chain carries Phosphoserine. K701 participates in a covalent cross-link: Glycyl lysine isopeptide (Lys-Gly) (interchain with G-Cter in SUMO1); alternate. K701 participates in a covalent cross-link: Glycyl lysine isopeptide (Lys-Gly) (interchain with G-Cter in SUMO2); alternate.

As to quaternary structure, part of the E2F6.com-1 complex in G0 phase composed of E2F6, MGA, MAX, TFDP1, CBX3, BAT8, EUHMTASE1, RING1, RNF2, MBLR, BAT8 and YAF2.

It localises to the nucleus. Putative Polycomb group (PcG) protein. PcG proteins maintain the transcriptionally repressive state of genes, probably via a modification of chromatin, rendering it heritably changed in its expressibility. Its association with a chromatin-remodeling complex suggests that it may contribute to prevent expression of genes that trigger the cell into mitosis. Binds to monomethylated and dimethylated 'Lys-20' on histone H4. Binds histone H3 peptides that are monomethylated or dimethylated on 'Lys-4', 'Lys-9' or 'Lys-27'. This is Lethal(3)malignant brain tumor-like protein 2 (L3MBTL2) from Bos taurus (Bovine).